We begin with the raw amino-acid sequence, 406 residues long: Imidazolonepropionase (406 aa).

Residues H72 and H74 each contribute to the Fe(3+) site. Residues H72 and H74 each contribute to the Zn(2+) site. Residues R81, Y144, and H177 each coordinate 4-imidazolone-5-propanoate. An N-formimidoyl-L-glutamate-binding site is contributed by Y144. Residue H242 participates in Fe(3+) binding. H242 provides a ligand contact to Zn(2+). Q245 contacts 4-imidazolone-5-propanoate. Fe(3+) is bound at residue D317. Residue D317 participates in Zn(2+) binding. 2 residues coordinate N-formimidoyl-L-glutamate: N319 and G321. T322 lines the 4-imidazolone-5-propanoate pocket.

It belongs to the metallo-dependent hydrolases superfamily. HutI family. It depends on Zn(2+) as a cofactor. The cofactor is Fe(3+).

It localises to the cytoplasm. The enzyme catalyses 4-imidazolone-5-propanoate + H2O = N-formimidoyl-L-glutamate. Its pathway is amino-acid degradation; L-histidine degradation into L-glutamate; N-formimidoyl-L-glutamate from L-histidine: step 3/3. Its function is as follows. Catalyzes the hydrolytic cleavage of the carbon-nitrogen bond in imidazolone-5-propanoate to yield N-formimidoyl-L-glutamate. It is the third step in the universal histidine degradation pathway. This chain is Imidazolonepropionase, found in Yersinia pseudotuberculosis serotype O:3 (strain YPIII).